The chain runs to 766 residues: Probable serine/threonine-protein kinase KKQ8 (766 aa).

Disordered regions lie at residues 1-165, 201-240, 277-297, 362-384, and 417-437; these read MPEH…DTSS, GHYA…AAQL, SDAN…LDLP, TRSH…DDPS, and AAKN…AGVQ. Over residues 14–25 the composition is skewed to low complexity; sequence RSLSLGSSMRSL. Over residues 49 to 64 the composition is skewed to basic and acidic residues; that stretch reads VDIRVDTASASREHTP. Over residues 94–120 the composition is skewed to polar residues; sequence LTPTNSNPQSKSGSPVSQNTSQESLIT. Positions 127–137 are enriched in basic and acidic residues; it reads EDYRPSKDSRR. 2 stretches are compositionally biased toward polar residues: residues 140–165 and 214–223; these read RNAS…DTSS and PTSSRVPSRS. Over residues 288–297 the composition is skewed to basic and acidic residues; it reads SKNDGHLDLP. Residues 372–382 are compositionally biased toward acidic residues; the sequence is DSSDDDEELDD. A compositionally biased stretch (basic residues) spans 419–430; sequence KNKHNQSSKHRT. The Protein kinase domain maps to 449-752; that stretch reads GKCVAVVGHG…IDKLLQTGWM (304 aa). ATP is bound by residues 455–463 and Lys493; that span reads VGHGAYGVV. Asp603 functions as the Proton acceptor in the catalytic mechanism.

The protein belongs to the protein kinase superfamily. CAMK Ser/Thr protein kinase family. NPR/HAL subfamily. HAL5 sub-subfamily.

Its subcellular location is the cytoplasm. It catalyses the reaction L-seryl-[protein] + ATP = O-phospho-L-seryl-[protein] + ADP + H(+). The enzyme catalyses L-threonyl-[protein] + ATP = O-phospho-L-threonyl-[protein] + ADP + H(+). In Candida glabrata (strain ATCC 2001 / BCRC 20586 / JCM 3761 / NBRC 0622 / NRRL Y-65 / CBS 138) (Yeast), this protein is Probable serine/threonine-protein kinase KKQ8 (KKQ8).